We begin with the raw amino-acid sequence, 222 residues long: Cytochrome b6-f complex iron-sulfur subunit, chloroplastic (222 aa).

The N-terminal 49 residues, 1-49 (MASTALSTASNPTQLCRTRASSLCKPVKGLGFGRERIPRNITCMAGSIS), are a transit peptide targeting the chloroplast. Residues 66–86 (LLGAISLPTFGMLVPYGSFLV) form a helical membrane-spanning segment. Residues 109 to 205 (VEDWLKTHGP…ADVDDGKVVF (97 aa)) form the Rieske domain. [2Fe-2S] cluster is bound by residues Cys-151, His-153, Cys-169, and His-172. The cysteines at positions 156 and 171 are disulfide-linked.

This sequence belongs to the Rieske iron-sulfur protein family. As to quaternary structure, the 4 large subunits of the cytochrome b6-f complex are cytochrome b6, subunit IV (17 kDa polypeptide, petD), cytochrome f and the Rieske protein, while the 4 small subunits are petG, petL, petM and petN. The complex functions as a dimer. [2Fe-2S] cluster is required as a cofactor.

It localises to the plastid. It is found in the chloroplast thylakoid membrane. The enzyme catalyses 2 oxidized [plastocyanin] + a plastoquinol + 2 H(+)(in) = 2 reduced [plastocyanin] + a plastoquinone + 4 H(+)(out). Functionally, component of the cytochrome b6-f complex, which mediates electron transfer between photosystem II (PSII) and photosystem I (PSI), cyclic electron flow around PSI, and state transitions. The sequence is that of Cytochrome b6-f complex iron-sulfur subunit, chloroplastic (petC) from Triticum aestivum (Wheat).